The sequence spans 140 residues: Nucleoside diphosphate kinase (140 aa).

The ATP site is built by Lys11, Phe59, Arg87, Thr93, Arg104, and Asn114. The active-site Pros-phosphohistidine intermediate is the His117.

The protein belongs to the NDK family. As to quaternary structure, homotetramer. The cofactor is Mg(2+).

It localises to the cytoplasm. The catalysed reaction is a 2'-deoxyribonucleoside 5'-diphosphate + ATP = a 2'-deoxyribonucleoside 5'-triphosphate + ADP. The enzyme catalyses a ribonucleoside 5'-diphosphate + ATP = a ribonucleoside 5'-triphosphate + ADP. Its function is as follows. Major role in the synthesis of nucleoside triphosphates other than ATP. The ATP gamma phosphate is transferred to the NDP beta phosphate via a ping-pong mechanism, using a phosphorylated active-site intermediate. The protein is Nucleoside diphosphate kinase of Granulibacter bethesdensis (strain ATCC BAA-1260 / CGDNIH1).